Reading from the N-terminus, the 347-residue chain is MSVMFDPQAAIYPFPPKPTPLNDDEKQFYREKIKRLLKERNAVMVAHYYTDPEIQQLAEETGGCISDSLEMARFGTKHAASTLLVAGVRFMGETAKILSPEKTILMPTLAAECSLDLGCPIDEFSAFCDAHPDRTVVVYANTSAAVKARADWVVTSSIAVELIEHLDSLGEKIIWAPDRHLGNYVQKQTGADVLCWQGACIVHDEFKTQALTRLKKIYPDAALLVHPESPQSIVEMADAVGSTSQLIKAAKTLPHRQLIVATDRGIFYKMQQAVPEKELLEAPTAGEGATCRSCAHCPWMAMNGLKAIAEGLEQGGAAHEIQVDAALREGALLPLNRMLDFAATLRA.

H47 and S68 together coordinate iminosuccinate. C113 is a binding site for [4Fe-4S] cluster. Residues 139-141 (YAN) and S156 each bind iminosuccinate. C200 lines the [4Fe-4S] cluster pocket. Iminosuccinate contacts are provided by residues 226-228 (HPE) and T243. C297 lines the [4Fe-4S] cluster pocket.

The protein belongs to the quinolinate synthase family. Type 1 subfamily. It depends on [4Fe-4S] cluster as a cofactor.

It is found in the cytoplasm. The catalysed reaction is iminosuccinate + dihydroxyacetone phosphate = quinolinate + phosphate + 2 H2O + H(+). Its pathway is cofactor biosynthesis; NAD(+) biosynthesis; quinolinate from iminoaspartate: step 1/1. Its function is as follows. Catalyzes the condensation of iminoaspartate with dihydroxyacetone phosphate to form quinolinate. This Salmonella heidelberg (strain SL476) protein is Quinolinate synthase.